Here is a 59-residue protein sequence, read N- to C-terminus: MNIQRAKELSVSAEQANVSFQGMPVMIQHVDESNETARIYEVKNPGRELTVPVNSLEEI.

Belongs to the SspH family.

It localises to the spore core. The polypeptide is Small, acid-soluble spore protein H 2 (sspH2) (Bacillus anthracis).